A 102-amino-acid polypeptide reads, in one-letter code: Secretoglobin family 1D member (102 aa).

The first 21 residues, 1–21 (MRLSVTALLVTLALCYYEANA), serve as a signal peptide directing secretion. N-linked (GlcNAc...) asparagine glycosylation occurs at asparagine 87.

This sequence belongs to the secretoglobin family. Lipophilin subfamily.

It is found in the secreted. Its function is as follows. May bind androgens and other steroids. May be under transcriptional regulation of steroid hormones. The sequence is that of Secretoglobin family 1D member (SCGB1D) from Bos taurus (Bovine).